Here is a 227-residue protein sequence, read N- to C-terminus: Cytochrome c oxidase subunit 2 (227 aa).

Topologically, residues 1-14 (MPYPLQLGLQDATS) are mitochondrial intermembrane. Residues 15–45 (PIMEELTHFHDHTLMIVFLISSLVLYIISSM) form a helical membrane-spanning segment. The Mitochondrial matrix portion of the chain corresponds to 46–59 (LTTKLTHTSTMDAQ). Residues 60–87 (EVETIWTILPAMILILIALPSLRILYMM) form a helical membrane-spanning segment. At 88-227 (DEINDPSLTV…YFEDWSASLL (140 aa)) the chain is on the mitochondrial intermembrane side. Residues His161, Cys196, Glu198, Cys200, His204, and Met207 each contribute to the Cu cation site. Mg(2+) is bound at residue Glu198.

It belongs to the cytochrome c oxidase subunit 2 family. As to quaternary structure, component of the cytochrome c oxidase (complex IV, CIV), a multisubunit enzyme composed of 14 subunits. The complex is composed of a catalytic core of 3 subunits MT-CO1, MT-CO2 and MT-CO3, encoded in the mitochondrial DNA, and 11 supernumerary subunits COX4I, COX5A, COX5B, COX6A, COX6B, COX6C, COX7A, COX7B, COX7C, COX8 and NDUFA4, which are encoded in the nuclear genome. The complex exists as a monomer or a dimer and forms supercomplexes (SCs) in the inner mitochondrial membrane with NADH-ubiquinone oxidoreductase (complex I, CI) and ubiquinol-cytochrome c oxidoreductase (cytochrome b-c1 complex, complex III, CIII), resulting in different assemblies (supercomplex SCI(1)III(2)IV(1) and megacomplex MCI(2)III(2)IV(2)). Found in a complex with TMEM177, COA6, COX18, COX20, SCO1 and SCO2. Interacts with TMEM177 in a COX20-dependent manner. Interacts with COX20. Interacts with COX16. It depends on Cu cation as a cofactor.

It is found in the mitochondrion inner membrane. It catalyses the reaction 4 Fe(II)-[cytochrome c] + O2 + 8 H(+)(in) = 4 Fe(III)-[cytochrome c] + 2 H2O + 4 H(+)(out). Its function is as follows. Component of the cytochrome c oxidase, the last enzyme in the mitochondrial electron transport chain which drives oxidative phosphorylation. The respiratory chain contains 3 multisubunit complexes succinate dehydrogenase (complex II, CII), ubiquinol-cytochrome c oxidoreductase (cytochrome b-c1 complex, complex III, CIII) and cytochrome c oxidase (complex IV, CIV), that cooperate to transfer electrons derived from NADH and succinate to molecular oxygen, creating an electrochemical gradient over the inner membrane that drives transmembrane transport and the ATP synthase. Cytochrome c oxidase is the component of the respiratory chain that catalyzes the reduction of oxygen to water. Electrons originating from reduced cytochrome c in the intermembrane space (IMS) are transferred via the dinuclear copper A center (CU(A)) of subunit 2 and heme A of subunit 1 to the active site in subunit 1, a binuclear center (BNC) formed by heme A3 and copper B (CU(B)). The BNC reduces molecular oxygen to 2 water molecules using 4 electrons from cytochrome c in the IMS and 4 protons from the mitochondrial matrix. This Dugong dugon (Dugong) protein is Cytochrome c oxidase subunit 2 (MT-CO2).